The following is a 99-amino-acid chain: MRIDILATAALLAQLASASPAPAKRQTYIACSGLYGTAQCCATDVLGLVNLDCGNPPSLPTSPDEFSSVCSAIGQRARCCVLPIVSFMRLIIQDYPISY.

Residues 1–18 form the signal peptide; it reads MRIDILATAALLAQLASA. Disulfide bonds link Cys-31–Cys-79, Cys-40–Cys-70, and Cys-41–Cys-53.

The protein belongs to the cerato-ulmin hydrophobin family. Homodimer. Homodimers further self-assemble to form highly ordered films at water-air interfaces through intermolecular interactions.

The protein localises to the secreted. It localises to the cell wall. In terms of biological role, aerial growth, conidiation, and dispersal of filamentous fungi in the environment rely upon a capability of their secreting small amphipathic proteins called hydrophobins (HPBs) with low sequence identity. Class I can self-assemble into an outermost layer of rodlet bundles on aerial cell surfaces, conferring cellular hydrophobicity that supports fungal growth, development and dispersal; whereas Class II form highly ordered films at water-air interfaces through intermolecular interactions but contribute nothing to the rodlet structure. Hyd3 is a class II hydrophobin required for barley root colonization. Hyd1 and Hyd3 are jointly required for conidial hydrophobicity and dispersal, but seem not to be involved in mycelia hydrophobicity. Inhibits conidial germination in environments not suitable for mycelial growth. Plays probably a role in intraspecific signaling or hyphal fusion. The sequence is that of Class II hydrophobin 3 from Bionectria ochroleuca (Gliocladium roseum).